Reading from the N-terminus, the 348-residue chain is Lipoyl synthase (348 aa).

7 residues coordinate [4Fe-4S] cluster: Cys-55, Cys-60, Cys-66, Cys-81, Cys-85, Cys-88, and Ser-292. The region spanning 67 to 281 (WESREATFLI…ADAAKEMGFA (215 aa)) is the Radical SAM core domain.

It belongs to the radical SAM superfamily. Lipoyl synthase family. [4Fe-4S] cluster serves as cofactor.

Its subcellular location is the cytoplasm. The enzyme catalyses [[Fe-S] cluster scaffold protein carrying a second [4Fe-4S](2+) cluster] + N(6)-octanoyl-L-lysyl-[protein] + 2 oxidized [2Fe-2S]-[ferredoxin] + 2 S-adenosyl-L-methionine + 4 H(+) = [[Fe-S] cluster scaffold protein] + N(6)-[(R)-dihydrolipoyl]-L-lysyl-[protein] + 4 Fe(3+) + 2 hydrogen sulfide + 2 5'-deoxyadenosine + 2 L-methionine + 2 reduced [2Fe-2S]-[ferredoxin]. Its pathway is protein modification; protein lipoylation via endogenous pathway; protein N(6)-(lipoyl)lysine from octanoyl-[acyl-carrier-protein]: step 2/2. In terms of biological role, catalyzes the radical-mediated insertion of two sulfur atoms into the C-6 and C-8 positions of the octanoyl moiety bound to the lipoyl domains of lipoate-dependent enzymes, thereby converting the octanoylated domains into lipoylated derivatives. This Corynebacterium glutamicum (strain R) protein is Lipoyl synthase.